The sequence spans 245 residues: Ribonuclease 3 (245 aa).

The region spanning 17–146 (FAKKMNELGF…FVGALYLDQG (130 aa)) is the RNase III domain. Glu-59 contributes to the Mg(2+) binding site. Residue Asp-63 is part of the active site. Residues Asp-132 and Glu-135 each coordinate Mg(2+). Glu-135 is a catalytic residue. Positions 172–241 (DFKTQFQEYV…AESAYSKLKS (70 aa)) constitute a DRBM domain. The disordered stretch occupies residues 217-245 (ATGQGKTKKESEQKAAESAYSKLKSNNNL).

The protein belongs to the ribonuclease III family. As to quaternary structure, homodimer. The cofactor is Mg(2+).

It is found in the cytoplasm. It catalyses the reaction Endonucleolytic cleavage to 5'-phosphomonoester.. Its function is as follows. Digests double-stranded RNA. Involved in the processing of primary rRNA transcript to yield the immediate precursors to the large and small rRNAs (23S and 16S). Processes some mRNAs, and tRNAs when they are encoded in the rRNA operon. Processes pre-crRNA and tracrRNA of type II CRISPR loci if present in the organism. This chain is Ribonuclease 3, found in Staphylococcus haemolyticus (strain JCSC1435).